A 352-amino-acid chain; its full sequence is Protein CIA1 (352 aa).

WD repeat units follow at residues 18–64 (GHTD…RSWT), 72–111 (THTR…FECI), 116–155 (GHEN…EYDC), 161–200 (GHTQ…GEYQ), 211–250 (GHSS…MQSG), 265–303 (YHDR…SVDG), and 315–352 (AHEN…ATKP).

It belongs to the WD repeat CIA1 family. In terms of assembly, part of a complex composed of AE7, CIA1, MMS19 and NAR1. Interacts with AE7 and NAR1.

It is found in the nucleus. Its subcellular location is the cytoplasm. Its function is as follows. Essential component of the cytosolic iron-sulfur (Fe-S) protein assembly (CIA) machinery. Required for the maturation of extramitochondrial Fe/S proteins. The sequence is that of Protein CIA1 from Arabidopsis thaliana (Mouse-ear cress).